The primary structure comprises 218 residues: uncharacterized protein (218 aa).

The chain crosses the membrane as a helical span at residues alanine 11–serine 31.

It localises to the membrane. This is an uncharacterized protein from Escherichia coli (strain K12).